Here is a 269-residue protein sequence, read N- to C-terminus: 3-methyl-2-oxobutanoate hydroxymethyltransferase (269 aa).

2 residues coordinate Mg(2+): Asp-43 and Asp-82. 3-methyl-2-oxobutanoate contacts are provided by residues 43–44 (DS), Asp-82, and Lys-110. Residue Glu-112 participates in Mg(2+) binding. Glu-179 serves as the catalytic Proton acceptor.

This sequence belongs to the PanB family. As to quaternary structure, homodecamer; pentamer of dimers. Mg(2+) serves as cofactor.

It is found in the cytoplasm. It carries out the reaction 3-methyl-2-oxobutanoate + (6R)-5,10-methylene-5,6,7,8-tetrahydrofolate + H2O = 2-dehydropantoate + (6S)-5,6,7,8-tetrahydrofolate. It participates in cofactor biosynthesis; (R)-pantothenate biosynthesis; (R)-pantoate from 3-methyl-2-oxobutanoate: step 1/2. Its function is as follows. Catalyzes the reversible reaction in which hydroxymethyl group from 5,10-methylenetetrahydrofolate is transferred onto alpha-ketoisovalerate to form ketopantoate. This is 3-methyl-2-oxobutanoate hydroxymethyltransferase from Acinetobacter baumannii (strain AB307-0294).